A 192-amino-acid polypeptide reads, in one-letter code: MNNANFEKYVDLVFEANKNFNLTGFKTKEAIYQNLVIEILTLFKGYEKFFIDKTVADLGSGNGSPGIILKLLFQKIKKLVLIDSKHKKISFLNKLTKQLNLEKTVAICERIEVHKNHYDVICSRGLSTIIKVNDLAFSLLNSKGIIFHIKQSLDQYIEFEKSNQKNQFNLLFIKHFTSQNKKLILIALQKND.

Residues Gly59, 111–112, and Arg124 each bind S-adenosyl-L-methionine; that span reads IE.

This sequence belongs to the methyltransferase superfamily. RNA methyltransferase RsmG family.

The protein localises to the cytoplasm. Functionally, specifically methylates the N7 position of a guanine in 16S rRNA. The chain is Ribosomal RNA small subunit methyltransferase G from Mycoplasma genitalium (strain ATCC 33530 / DSM 19775 / NCTC 10195 / G37) (Mycoplasmoides genitalium).